A 166-amino-acid polypeptide reads, in one-letter code: Thiamine precursor transporter HmpT (166 aa).

A run of 5 helical transmembrane segments spans residues 14 to 34, 35 to 55, 62 to 82, 105 to 125, and 126 to 146; these read LLAIWTALTFVLGRLFTFPIP, GSAGNILTLLDVGIYTAVFLF, IIGGFAAFLLDLTAGFSNYMF, FLLSLLVMVGGYFIVGGLMYG, and WGSAIAGLWVNIVQVIVGFVL.

In terms of assembly, in E.coli forms a stable energy-coupling factor (ECF) transporter complex composed of 2 membrane-embedded substrate-binding protein (S component), 2 ATP-binding proteins (A and A' components) and 2 transmembrane proteins (T component), probably with a stoichiometry of 2:1:1:2. May be able to interact with more than 1 S component at a time.

The protein resides in the cell membrane. In terms of biological role, probably a thiamine precursor-binding protein that interacts with the energy-coupling factor (ECF) ABC-transporter complex. Unlike classic ABC transporters this ECF transporter provides the energy necessary to transport a number of different substrates. The substrates themselves are bound by transmembrane, not extracytoplasmic soluble proteins. The polypeptide is Thiamine precursor transporter HmpT (hmpT) (Lactococcus lactis subsp. cremoris (strain MG1363)).